The following is a 383-amino-acid chain: Peroxisomal membrane protein PEX15 (383 aa).

Topologically, residues Met1 to Ser331 are cytoplasmic. A helical transmembrane segment spans residues Val332–Leu349. Residues Lys350–Ile383 are Lumenal-facing.

Interacts with PEX6. Interacts with PEX19; targets PEX15 to the peroxisome. Post-translationally, phosphorylated.

The protein resides in the peroxisome membrane. It is found in the endoplasmic reticulum membrane. Functionally, peroxisomal docking factor that anchors PEX1 and PEX6 to peroxisome membranes. PEX26 is therefore required for the formation of the PEX1-PEX6 AAA ATPase complex, a complex that mediates the extraction of the PEX5 receptor from peroxisomal membrane. The polypeptide is Peroxisomal membrane protein PEX15 (PEX15) (Saccharomyces cerevisiae (strain ATCC 204508 / S288c) (Baker's yeast)).